The chain runs to 454 residues: tRNA modification GTPase MnmE (454 aa).

Residues R23, E80, and K120 each coordinate (6S)-5-formyl-5,6,7,8-tetrahydrofolate. The TrmE-type G domain maps to 216–377; sequence GMKVVIAGRP…LREHLKQSMG (162 aa). A K(+)-binding site is contributed by N226. GTP is bound by residues 226 to 231, 245 to 251, and 270 to 273; these read NAGKSS, TDIAGTT, and DTAG. S230 lines the Mg(2+) pocket. The K(+) site is built by T245, I247, and T250. Position 251 (T251) interacts with Mg(2+). Position 454 (K454) interacts with (6S)-5-formyl-5,6,7,8-tetrahydrofolate.

This sequence belongs to the TRAFAC class TrmE-Era-EngA-EngB-Septin-like GTPase superfamily. TrmE GTPase family. In terms of assembly, homodimer. Heterotetramer of two MnmE and two MnmG subunits. K(+) is required as a cofactor.

The protein localises to the cytoplasm. Exhibits a very high intrinsic GTPase hydrolysis rate. Involved in the addition of a carboxymethylaminomethyl (cmnm) group at the wobble position (U34) of certain tRNAs, forming tRNA-cmnm(5)s(2)U34. This is tRNA modification GTPase MnmE from Mannheimia succiniciproducens (strain KCTC 0769BP / MBEL55E).